Here is a 24-residue protein sequence, read N- to C-terminus: Coenzyme PQQ synthesis protein A (24 aa).

Residues 16–20 (EVTMY) constitute a cross-link (pyrroloquinoline quinone (Glu-Tyr)).

This sequence belongs to the PqqA family.

It functions in the pathway cofactor biosynthesis; pyrroloquinoline quinone biosynthesis. Required for coenzyme pyrroloquinoline quinone (PQQ) biosynthesis. PQQ is probably formed by cross-linking a specific glutamate to a specific tyrosine residue and excising these residues from the peptide. This chain is Coenzyme PQQ synthesis protein A, found in Methylococcus capsulatus (strain ATCC 33009 / NCIMB 11132 / Bath).